A 344-amino-acid chain; its full sequence is Rho guanine nucleotide exchange factor 39 (344 aa).

One can recognise a DH domain in the interval 22–197 (KRVCTARELL…SETAQKVHAI (176 aa)). The region spanning 227–331 (WFLRQGWLLV…WHHSLTLAIR (105 aa)) is the PH domain.

It is found in the cell membrane. Promotes cell proliferation. The polypeptide is Rho guanine nucleotide exchange factor 39 (Arhgef39) (Mus musculus (Mouse)).